The sequence spans 61 residues: Small ribosomal subunit protein uS14 (61 aa).

Basic residues predominate over residues 1–14 (MAKTSQKVRNHRPA). Residues 1-20 (MAKTSQKVRNHRPAKFSSRE) are disordered. Positions 24, 27, 40, and 43 each coordinate Zn(2+).

The protein belongs to the universal ribosomal protein uS14 family. Zinc-binding uS14 subfamily. Part of the 30S ribosomal subunit. Contacts proteins S3 and S10. Zn(2+) serves as cofactor.

Functionally, binds 16S rRNA, required for the assembly of 30S particles and may also be responsible for determining the conformation of the 16S rRNA at the A site. In Lactobacillus delbrueckii subsp. bulgaricus (strain ATCC 11842 / DSM 20081 / BCRC 10696 / JCM 1002 / NBRC 13953 / NCIMB 11778 / NCTC 12712 / WDCM 00102 / Lb 14), this protein is Small ribosomal subunit protein uS14.